We begin with the raw amino-acid sequence, 144 residues long: Deoxyuridine 5'-triphosphate nucleotidohydrolase (144 aa).

Substrate contacts are provided by residues 63–65 (RSG), Asn76, and 80–82 (TID).

The protein belongs to the dUTPase family. The cofactor is Mg(2+).

The enzyme catalyses dUTP + H2O = dUMP + diphosphate + H(+). The protein operates within pyrimidine metabolism; dUMP biosynthesis; dUMP from dCTP (dUTP route): step 2/2. This enzyme is involved in nucleotide metabolism: it produces dUMP, the immediate precursor of thymidine nucleotides and it decreases the intracellular concentration of dUTP so that uracil cannot be incorporated into DNA. This Bacteroides fragilis (strain YCH46) protein is Deoxyuridine 5'-triphosphate nucleotidohydrolase.